Reading from the N-terminus, the 670-residue chain is UvrABC system protein B (670 aa).

In terms of domain architecture, Helicase ATP-binding spans 26-183; it reads NGLKSGLAFQ…QRLVDLQYNR (158 aa). An ATP-binding site is contributed by 39-46; it reads GVTGSGKT. The Beta-hairpin motif lies at 92–115; that stretch reads YYDYYQPEAYVPSSDSFIEKDAAI. In terms of domain architecture, Helicase C-terminal spans 431–597; that stretch reads QVDDLLSEIN…GLSKQVNDVM (167 aa). The UVR domain maps to 630 to 665; sequence LKQIALSEKQMFACAKNLEFEKAALFRDEVTKLHEQ.

It belongs to the UvrB family. Forms a heterotetramer with UvrA during the search for lesions. Interacts with UvrC in an incision complex.

It is found in the cytoplasm. Its function is as follows. The UvrABC repair system catalyzes the recognition and processing of DNA lesions. A damage recognition complex composed of 2 UvrA and 2 UvrB subunits scans DNA for abnormalities. Upon binding of the UvrA(2)B(2) complex to a putative damaged site, the DNA wraps around one UvrB monomer. DNA wrap is dependent on ATP binding by UvrB and probably causes local melting of the DNA helix, facilitating insertion of UvrB beta-hairpin between the DNA strands. Then UvrB probes one DNA strand for the presence of a lesion. If a lesion is found the UvrA subunits dissociate and the UvrB-DNA preincision complex is formed. This complex is subsequently bound by UvrC and the second UvrB is released. If no lesion is found, the DNA wraps around the other UvrB subunit that will check the other stand for damage. This chain is UvrABC system protein B, found in Psychromonas ingrahamii (strain DSM 17664 / CCUG 51855 / 37).